A 509-amino-acid polypeptide reads, in one-letter code: Probable xyloglucan galactosyltransferase GT12 (509 aa).

The Cytoplasmic segment spans residues 1–3; sequence MMK. The chain crosses the membrane as a helical; Signal-anchor for type II membrane protein span at residues 4–24; the sequence is PVPKLWVVISSAFVFCLLVLF. Residues 25-509 lie on the Lumenal side of the membrane; that stretch reads QINKSDLIEA…KLEIIHEKTA (485 aa). Asn27, Asn59, Asn65, Asn169, Asn170, Asn195, Asn257, and Asn416 each carry an N-linked (GlcNAc...) asparagine glycan.

It belongs to the glycosyltransferase 47 family. Expressed in pollen grains.

It is found in the golgi apparatus membrane. Its function is as follows. Functions in xyloglucan synthesis by adding side chains to the xylosylated glucan backbone. Involved in the galactosylation of hemicellulose xyloglucan. In Arabidopsis thaliana (Mouse-ear cress), this protein is Probable xyloglucan galactosyltransferase GT12.